We begin with the raw amino-acid sequence, 361 residues long: Aromatic amino acid aminotransferase (361 aa).

Position 221 is an N6-(pyridoxal phosphate)lysine (lysine 221).

Belongs to the class-II pyridoxal-phosphate-dependent aminotransferase family. In terms of assembly, homodimer. Pyridoxal 5'-phosphate serves as cofactor.

It catalyses the reaction an aromatic L-alpha-amino acid + 2-oxoglutarate = an aromatic oxo-acid + L-glutamate. Its function is as follows. Aminotransferase that catalyzes the conversion of aromatic amino acids and 2-oxoglutarate into corresponding aromatic oxo acids and L-glutamate. This is Aromatic amino acid aminotransferase from Mycobacterium marinum (strain ATCC BAA-535 / M).